Here is a 209-residue protein sequence, read N- to C-terminus: 2,3-bisphosphoglycerate-dependent phosphoglycerate mutase (209 aa).

Substrate is bound by residues 8 to 15 (RHGQSEGN), 21 to 22 (TG), R60, 87 to 90 (ERDY), K98, 114 to 115 (RR), and 158 to 159 (GN). H9 acts as the Tele-phosphohistidine intermediate in catalysis. Catalysis depends on E87, which acts as the Proton donor/acceptor.

It belongs to the phosphoglycerate mutase family. BPG-dependent PGAM subfamily. Homodimer.

It catalyses the reaction (2R)-2-phosphoglycerate = (2R)-3-phosphoglycerate. It functions in the pathway carbohydrate degradation; glycolysis; pyruvate from D-glyceraldehyde 3-phosphate: step 3/5. Functionally, catalyzes the interconversion of 2-phosphoglycerate and 3-phosphoglycerate. This chain is 2,3-bisphosphoglycerate-dependent phosphoglycerate mutase, found in Rhizobium etli (strain ATCC 51251 / DSM 11541 / JCM 21823 / NBRC 15573 / CFN 42).